The following is a 546-amino-acid chain: (-)-5-epieremophilene synthase STPS2 (546 aa).

Residues aspartate 299, aspartate 303, aspartate 442, threonine 446, and glutamate 450 each coordinate Mg(2+). The DDXXD motif motif lies at 299–303; that stretch reads DDTYD.

This sequence belongs to the terpene synthase family. Tpsa subfamily. Monomer. Requires Mg(2+) as cofactor. Highly expressed in leaves. Expressed at levels in flowers.

It carries out the reaction (2E,6E)-farnesyl diphosphate = (-)-5-epi-eremophilene + diphosphate. The protein operates within secondary metabolite biosynthesis; terpenoid biosynthesis. Its function is as follows. Sesquiterpene synthase that catalyzes the conversion of farnesyl diphosphate to (-)-5-epi-eremophilene. The polypeptide is (-)-5-epieremophilene synthase STPS2 (Salvia miltiorrhiza (Chinese sage)).